We begin with the raw amino-acid sequence, 70 residues long: Small ribosomal subunit protein bS21 (70 aa).

The tract at residues 40-70 (KPTAERKRKHAAAVKRHYKRIRSQQLPPRLY) is disordered. Over residues 45-61 (RKRKHAAAVKRHYKRIR) the composition is skewed to basic residues.

The protein belongs to the bacterial ribosomal protein bS21 family.

This Bordetella parapertussis (strain 12822 / ATCC BAA-587 / NCTC 13253) protein is Small ribosomal subunit protein bS21.